The primary structure comprises 638 residues: 9-cis-epoxycarotenoid dioxygenase NCED1, chloroplastic (638 aa).

The N-terminal 80 residues, 1–80 (MQRICPAHCS…QTEQEDEQLV (80 aa)), are a transit peptide targeting the chloroplast. 3 stretches are compositionally biased toward low complexity: residues 28 to 37 (AASAAPQSPS), 44 to 69 (ASAAPPSAAASTTVLTSPLVTTTRTP), and 92 to 102 (TTNGRAAPSQS). 2 disordered regions span residues 28 to 80 (AASA…EQLV) and 92 to 113 (TTNGRAAPSQSRPRRRPAPAAA). Residues histidine 331, histidine 380, histidine 446, and histidine 624 each coordinate Fe cation.

It belongs to the carotenoid oxygenase family. Fe(2+) is required as a cofactor.

Its subcellular location is the plastid. It is found in the chloroplast. It catalyses the reaction a 9-cis-epoxycarotenoid + O2 = a 12'-apo-carotenal + 2-cis,4-trans-xanthoxin. The catalysed reaction is 9-cis-violaxanthin + O2 = (3S,5R,6S)-5,6-epoxy-3-hydroxy-5,6-dihydro-12'-apo-beta-caroten-12'-al + 2-cis,4-trans-xanthoxin. It carries out the reaction 9'-cis-neoxanthin + O2 = (3S,5R,6R)-3,5-dihydroxy-6,7-didehydro-5,6-dihydro-12'-apo-beta-caroten-12'-al + 2-cis,4-trans-xanthoxin. Its function is as follows. Has a 11,12(11',12') 9-cis epoxycarotenoid cleavage activity. Catalyzes the first step of abscisic-acid biosynthesis from carotenoids. The polypeptide is 9-cis-epoxycarotenoid dioxygenase NCED1, chloroplastic (Oryza sativa subsp. japonica (Rice)).